The primary structure comprises 398 residues: Acetate kinase (398 aa).

A Mg(2+)-binding site is contributed by Asn-7. Lys-14 is an ATP binding site. Substrate is bound at residue Arg-91. Asp-148 functions as the Proton donor/acceptor in the catalytic mechanism. Residues 208–212 (HLGNG), 283–285 (DFR), and 331–335 (GIGEH) contribute to the ATP site. Glu-386 serves as a coordination point for Mg(2+).

The protein belongs to the acetokinase family. As to quaternary structure, homodimer. Mg(2+) is required as a cofactor. Requires Mn(2+) as cofactor.

The protein localises to the cytoplasm. It carries out the reaction acetate + ATP = acetyl phosphate + ADP. The protein operates within metabolic intermediate biosynthesis; acetyl-CoA biosynthesis; acetyl-CoA from acetate: step 1/2. Catalyzes the formation of acetyl phosphate from acetate and ATP. Can also catalyze the reverse reaction. The sequence is that of Acetate kinase from Clostridium botulinum (strain Eklund 17B / Type B).